We begin with the raw amino-acid sequence, 314 residues long: Homoserine O-succinyltransferase (314 aa).

C142 serves as the catalytic Acyl-thioester intermediate. Substrate is bound by residues K163 and S192. The Proton acceptor role is filled by H235. Residue E237 is part of the active site. R249 is a binding site for substrate.

The protein belongs to the MetA family.

It is found in the cytoplasm. The enzyme catalyses L-homoserine + succinyl-CoA = O-succinyl-L-homoserine + CoA. The protein operates within amino-acid biosynthesis; L-methionine biosynthesis via de novo pathway; O-succinyl-L-homoserine from L-homoserine: step 1/1. Transfers a succinyl group from succinyl-CoA to L-homoserine, forming succinyl-L-homoserine. This Shewanella frigidimarina (strain NCIMB 400) protein is Homoserine O-succinyltransferase.